Consider the following 491-residue polypeptide: Probable polygalacturonase (491 aa).

A helical membrane pass occupies residues 15 to 35 (PIVSFYCFQVVSVLVAVVLLL). N-linked (GlcNAc...) asparagine glycosylation is found at N165, N175, and N214. 4 PbH1 repeats span residues 230 to 256 (SRNI…NPDS), 257 to 278 (CTNT…AVKS), 319 to 340 (IQDV…RIKT), and 348 to 369 (VKDI…WMTG). The active-site Proton donor is D271. 2 N-linked (GlcNAc...) asparagine glycosylation sites follow: N399 and N421.

This sequence belongs to the glycosyl hydrolase 28 family.

The protein resides in the membrane. The catalysed reaction is (1,4-alpha-D-galacturonosyl)n+m + H2O = (1,4-alpha-D-galacturonosyl)n + (1,4-alpha-D-galacturonosyl)m.. This Vitis vinifera (Grape) protein is Probable polygalacturonase.